Here is a 134-residue protein sequence, read N- to C-terminus: UPF0102 protein Rmet_3430 (134 aa).

Belongs to the UPF0102 family.

The chain is UPF0102 protein Rmet_3430 from Cupriavidus metallidurans (strain ATCC 43123 / DSM 2839 / NBRC 102507 / CH34) (Ralstonia metallidurans).